The sequence spans 132 residues: Fluoride-specific ion channel FluC 2 (132 aa).

4 consecutive transmembrane segments (helical) span residues 12–32 (LTELLLVAVGAVPGALLRWQL), 41–61 (LLVNVLGAALLGLLAGRPVAP), 65–85 (LLVGIGFCGSLTTFSSWMLAA), and 96–116 (AALGLIGLTLGLGLGAAALGF). Residues Gly73 and Thr76 each coordinate Na(+).

The protein belongs to the fluoride channel Fluc/FEX (TC 1.A.43) family.

The protein resides in the cell inner membrane. It catalyses the reaction fluoride(in) = fluoride(out). Its activity is regulated as follows. Na(+) is not transported, but it plays an essential structural role and its presence is essential for fluoride channel function. Fluoride-specific ion channel. Important for reducing fluoride concentration in the cell, thus reducing its toxicity. In Parasynechococcus marenigrum (strain WH8102), this protein is Fluoride-specific ion channel FluC 2.